The sequence spans 219 residues: Endonuclease III (219 aa).

In terms of domain architecture, HhH spans 117 to 136 (MEELLTLPGVARKTANVVLA). Residues cysteine 197, cysteine 204, cysteine 207, and cysteine 213 each contribute to the [4Fe-4S] cluster site.

This sequence belongs to the Nth/MutY family. [4Fe-4S] cluster is required as a cofactor.

The catalysed reaction is 2'-deoxyribonucleotide-(2'-deoxyribose 5'-phosphate)-2'-deoxyribonucleotide-DNA = a 3'-end 2'-deoxyribonucleotide-(2,3-dehydro-2,3-deoxyribose 5'-phosphate)-DNA + a 5'-end 5'-phospho-2'-deoxyribonucleoside-DNA + H(+). Its function is as follows. DNA repair enzyme that has both DNA N-glycosylase activity and AP-lyase activity. The DNA N-glycosylase activity releases various damaged pyrimidines from DNA by cleaving the N-glycosidic bond, leaving an AP (apurinic/apyrimidinic) site. The AP-lyase activity cleaves the phosphodiester bond 3' to the AP site by a beta-elimination, leaving a 3'-terminal unsaturated sugar and a product with a terminal 5'-phosphate. The sequence is that of Endonuclease III from Synechocystis sp. (strain ATCC 27184 / PCC 6803 / Kazusa).